Reading from the N-terminus, the 896-residue chain is C-type lectin domain-containing protein 180 (896 aa).

The first 18 residues, 1–18 (MRHLIFTGFVLTLTALEA), serve as a signal peptide directing secretion. Residues 54–178 (PWGDLYQFRA…CESTSPDHHA (125 aa)) form the C-type lectin domain. Asparagine 133 is a glycosylation site (N-linked (GlcNAc...) asparagine). Cysteine 154 and cysteine 169 are joined by a disulfide. N-linked (GlcNAc...) asparagine glycans are attached at residues asparagine 221 and asparagine 235. Disordered stretches follow at residues 243 to 264 (STVKFSDSEEETSSEEEESVSK), 354 to 436 (VKQE…LAPE), 492 to 519 (EKLENSKKSEEEKEELAKKDQMSTEEQK), and 557 to 809 (KVKA…TTKP). Acidic residues predominate over residues 250–260 (SEEETSSEEEE). Basic and acidic residues-rich tracts occupy residues 354-382 (VKQEKTDEKKVEDKKETLANELNDNKISE) and 395-406 (DMPKADIEPPKE). Positions 407-426 (EDCDEEGSGSGSGEEDEKDE) are enriched in acidic residues. Residues 427–436 (SSEKIELAPE) show a composition bias toward basic and acidic residues. Basic and acidic residues-rich tracts occupy residues 575–590 (KSAKEGKAEIKEKVGN), 607–663 (QNRE…ETKL), and 683–692 (EEPKSDKDSE). A compositionally biased stretch (low complexity) spans 727 to 739 (STTTESTTVAVKE). Over residues 740-768 (VPVDEIEKIAKLEAKQHTEDEKVTVETKQ) the composition is skewed to basic and acidic residues. Positions 773–809 (TPAPTTSEKTSTTAAPSTKPAEETTTTTEAPSTTTKP) are enriched in low complexity.

It localises to the secreted. This is C-type lectin domain-containing protein 180 (clec-180) from Caenorhabditis elegans.